The primary structure comprises 573 residues: MAAAQTFSANCDPVNFHNLQSYPSESVTYSCKMGNVSSLMEKQDFPNEGFNLDFRPFPEPSCKRGLHQKEFLSYLNITKKEGKNNKKFPSGLGFRREHSLQAEENDYPVFYHKDHRGTEFSKSSLPERGHSDKSRFGPSALKSNVKAFMSIQSLHQSTNKLSKSNGSLNTLGCVGSPPCRGPLQPSNSHSNNPSESGNDEDDDSLSDSKQNSINSLNSYSPSFTVARGQISASLGHINHIGGSLDRASRGLRDTMAGEKGTLSCRNMATLSRLQCSGEPPPPYEYSESVEDVARQLEKRLQEKGMEAQQLRRNASDNDDPFTQVFEDKRRLWMEELDELKQMYMSKLQQISQQALRSQRALQLQLYKVQQEKKRLQEELNSLQGENEELRQKQSQSDNSGPNLEDSKWEISQKAGEISFLKQQLRDSQAEINLKLGEVVSLKVQLREAKALVKEKEKESAELSDCLQALEDVKSQTPVDLPRDSSDTIDVERLRAELMLERRQNEAQILIFETERKVWKEEKDKVLRYQKEIQSSYLEMYQRNQALERQVLELRQGVGQSLSSPASWMDTVET.

3 disordered regions span residues 119–138 (EFSKSSLPERGHSDKSRFGP), 173–220 (CVGS…NSYS), and 384–405 (GENEELRQKQSQSDNSGPNLED). The segment covering 125–135 (LPERGHSDKSR) has biased composition (basic and acidic residues). Residues 186 to 196 (SNSHSNNPSES) show a composition bias toward low complexity. Polar residues-rich tracts occupy residues 207–220 (DSKQNSINSLNSYS) and 392–401 (KQSQSDNSGP). A coiled-coil region spans residues 287–474 (ESVEDVARQL…CLQALEDVKS (188 aa)).

The protein belongs to the N4BP3 family.

The protein localises to the cytoplasmic vesicle. It localises to the cell projection. The protein resides in the axon. Its subcellular location is the dendrite. Its function is as follows. Plays a role in axon and dendrite arborization during cranial nerve development. Also important for neural crest migration and early development of other anterior structures including eye, brain and cranial cartilage. The polypeptide is NEDD4-binding protein 3-B (Xenopus laevis (African clawed frog)).